We begin with the raw amino-acid sequence, 124 residues long: Phosphoribosyl-AMP cyclohydrolase (124 aa).

Aspartate 82 lines the Mg(2+) pocket. Residue cysteine 83 participates in Zn(2+) binding. Residues aspartate 84 and aspartate 86 each contribute to the Mg(2+) site. Zn(2+) is bound by residues cysteine 99 and cysteine 106.

The protein belongs to the PRA-CH family. Homodimer. Mg(2+) is required as a cofactor. Requires Zn(2+) as cofactor.

The protein resides in the cytoplasm. The catalysed reaction is 1-(5-phospho-beta-D-ribosyl)-5'-AMP + H2O = 1-(5-phospho-beta-D-ribosyl)-5-[(5-phospho-beta-D-ribosylamino)methylideneamino]imidazole-4-carboxamide. Its pathway is amino-acid biosynthesis; L-histidine biosynthesis; L-histidine from 5-phospho-alpha-D-ribose 1-diphosphate: step 3/9. In terms of biological role, catalyzes the hydrolysis of the adenine ring of phosphoribosyl-AMP. This chain is Phosphoribosyl-AMP cyclohydrolase, found in Rhizorhabdus wittichii (strain DSM 6014 / CCUG 31198 / JCM 15750 / NBRC 105917 / EY 4224 / RW1) (Sphingomonas wittichii).